A 378-amino-acid polypeptide reads, in one-letter code: Queuine tRNA-ribosyltransferase (378 aa).

Aspartate 91 acts as the Proton acceptor in catalysis. Residues 91 to 95 (DSGGF), aspartate 145, glutamine 189, and glycine 216 contribute to the substrate site. Positions 247–253 (GVGKPED) are RNA binding. Aspartate 266 (nucleophile) is an active-site residue. Residues 271–275 (TRNAR) are RNA binding; important for wobble base 34 recognition. Zn(2+)-binding residues include cysteine 304, cysteine 306, cysteine 309, and histidine 335.

Belongs to the queuine tRNA-ribosyltransferase family. As to quaternary structure, homodimer. Within each dimer, one monomer is responsible for RNA recognition and catalysis, while the other monomer binds to the replacement base PreQ1. Zn(2+) is required as a cofactor.

It carries out the reaction 7-aminomethyl-7-carbaguanine + guanosine(34) in tRNA = 7-aminomethyl-7-carbaguanosine(34) in tRNA + guanine. The protein operates within tRNA modification; tRNA-queuosine biosynthesis. In terms of biological role, catalyzes the base-exchange of a guanine (G) residue with the queuine precursor 7-aminomethyl-7-deazaguanine (PreQ1) at position 34 (anticodon wobble position) in tRNAs with GU(N) anticodons (tRNA-Asp, -Asn, -His and -Tyr). Catalysis occurs through a double-displacement mechanism. The nucleophile active site attacks the C1' of nucleotide 34 to detach the guanine base from the RNA, forming a covalent enzyme-RNA intermediate. The proton acceptor active site deprotonates the incoming PreQ1, allowing a nucleophilic attack on the C1' of the ribose to form the product. After dissociation, two additional enzymatic reactions on the tRNA convert PreQ1 to queuine (Q), resulting in the hypermodified nucleoside queuosine (7-(((4,5-cis-dihydroxy-2-cyclopenten-1-yl)amino)methyl)-7-deazaguanosine). The protein is Queuine tRNA-ribosyltransferase of Vibrio campbellii (strain ATCC BAA-1116).